Consider the following 91-residue polypeptide: Em-like protein (91 aa).

Composition is skewed to basic and acidic residues over residues 1 to 18 (MEQQ…REGE) and 31 to 51 (DAQE…KEQI). The segment at 1 to 91 (MEQQQDRREL…PIDESKYRHP (91 aa)) is disordered. Residues 62–73 (KGGLSSAGGPGG) are compositionally biased toward gly residues. Residues 75 to 91 (RASEEGRPIDESKYRHP) are compositionally biased toward basic and acidic residues.

It belongs to the small hydrophilic plant seed protein family.

In Picea glauca (White spruce), this protein is Em-like protein.